The sequence spans 312 residues: tRNA uridine(34) hydroxylase (312 aa).

A Rhodanese domain is found at 130–225 (RGDDVVFFDG…YGEKYGNDGL (96 aa)). C185 serves as the catalytic Cysteine persulfide intermediate.

This sequence belongs to the TrhO family.

The catalysed reaction is uridine(34) in tRNA + AH2 + O2 = 5-hydroxyuridine(34) in tRNA + A + H2O. Its function is as follows. Catalyzes oxygen-dependent 5-hydroxyuridine (ho5U) modification at position 34 in tRNAs. This is tRNA uridine(34) hydroxylase from Corynebacterium diphtheriae (strain ATCC 700971 / NCTC 13129 / Biotype gravis).